The primary structure comprises 122 residues: Large ribosomal subunit protein uL14 (122 aa).

Belongs to the universal ribosomal protein uL14 family. As to quaternary structure, part of the 50S ribosomal subunit. Forms a cluster with proteins L3 and L19. In the 70S ribosome, L14 and L19 interact and together make contacts with the 16S rRNA in bridges B5 and B8.

Its function is as follows. Binds to 23S rRNA. Forms part of two intersubunit bridges in the 70S ribosome. In Desulfovibrio desulfuricans (strain ATCC 27774 / DSM 6949 / MB), this protein is Large ribosomal subunit protein uL14.